The primary structure comprises 208 residues: Ribosomal RNA large subunit methyltransferase E (208 aa).

5 residues coordinate S-adenosyl-L-methionine: Gly-62, Trp-64, Asp-82, Asp-98, and Asp-123. Catalysis depends on Lys-163, which acts as the Proton acceptor.

Belongs to the class I-like SAM-binding methyltransferase superfamily. RNA methyltransferase RlmE family.

The protein localises to the cytoplasm. It catalyses the reaction uridine(2552) in 23S rRNA + S-adenosyl-L-methionine = 2'-O-methyluridine(2552) in 23S rRNA + S-adenosyl-L-homocysteine + H(+). Specifically methylates the uridine in position 2552 of 23S rRNA at the 2'-O position of the ribose in the fully assembled 50S ribosomal subunit. In Mannheimia succiniciproducens (strain KCTC 0769BP / MBEL55E), this protein is Ribosomal RNA large subunit methyltransferase E.